The chain runs to 311 residues: Putative dihydroorotate dehydrogenase A (fumarate) (311 aa).

Substrate-binding positions include Lys-45, 69–73 (NSMGL), and Asn-128. 45-46 (KT) is an FMN binding site. Asn-128 contributes to the FMN binding site. Residue Cys-131 is the Nucleophile of the active site. FMN is bound by residues Lys-165 and Val-193. Position 194 to 195 (194 to 195 (NS)) interacts with substrate. FMN is bound by residues Gly-220, 248-249 (GG), and 270-271 (GT).

It belongs to the dihydroorotate dehydrogenase family. Type 1 subfamily. As to quaternary structure, homodimer. It depends on FMN as a cofactor.

The protein resides in the cytoplasm. The catalysed reaction is (S)-dihydroorotate + fumarate = orotate + succinate. The protein operates within pyrimidine metabolism; UMP biosynthesis via de novo pathway. Catalyzes the conversion of dihydroorotate to orotate with fumarate as the electron acceptor. This chain is Putative dihydroorotate dehydrogenase A (fumarate) (pyrD), found in Streptococcus pyogenes serotype M1.